We begin with the raw amino-acid sequence, 326 residues long: Aldo-keto reductase family 1 member D1 (326 aa).

Residues 22–26 and D53 contribute to the NADP(+) site; that span reads GLGTY. Residue Y26 participates in substrate binding. Y58, W89, E120, and Y132 together coordinate substrate. Y58 functions as the Proton donor in the catalytic mechanism. NADP(+) is bound by residues 169 to 170, Q193, and 219 to 224; these read SN and YSPLGT. W230 contacts substrate. Residue 273–283 coordinates NADP(+); that stretch reads KSFNPERIKEN.

It belongs to the aldo/keto reductase family.

The protein localises to the cytoplasm. It catalyses the reaction 5beta-cholestan-3-one + NADP(+) = cholest-4-en-3-one + NADPH + H(+). The enzyme catalyses 4,5beta-dihydrocortisone + NADP(+) = cortisone + NADPH + H(+). It carries out the reaction cortisol + NADPH + H(+) = 5beta-dihydrocortisol + NADP(+). The catalysed reaction is corticosterone + NADPH + H(+) = 5beta-dihydrocorticosterone + NADP(+). It catalyses the reaction 7alpha,12alpha-dihydroxycholest-4-en-3-one + NADPH + H(+) = 7alpha,12alpha-dihydroxy-5beta-cholestan-3-one + NADP(+). The enzyme catalyses 7alpha-hydroxycholest-4-en-3-one + NADPH + H(+) = 7alpha-hydroxy-5beta-cholestan-3-one + NADP(+). It carries out the reaction epitestosterone + NADPH + H(+) = 5beta-dihydroepitestosterone + NADP(+). The catalysed reaction is androst-4-ene-3,17-dione + NADPH + H(+) = 5beta-androstane-3,17-dione + NADP(+). It catalyses the reaction progesterone + NADPH + H(+) = 5beta-pregnan-3,20-dione + NADP(+). The enzyme catalyses 21-hydroxyprogesterone + NADPH + H(+) = 5beta-dihydrodeoxycorticosterone + NADP(+). It carries out the reaction aldosterone + NADPH + H(+) = 5beta-dihydroaldosterone + NADP(+). The catalysed reaction is 17beta-hydroxyandrosta-1,4-dien-3-one + NADPH + H(+) = 17beta-hydroxy-5beta-androst-1-en-3-one + NADP(+). It catalyses the reaction 17beta-hydroxyestr-4-en-3-one + NADPH + H(+) = 17beta-hydroxy-5beta-estran-3-one + NADP(+). The enzyme catalyses 5beta-dihydrotestosterone + NADP(+) = testosterone + NADPH + H(+). It carries out the reaction androst-4-ene-3,11,17-trione + NADPH + H(+) = 17beta-hydroxyandrost-4-ene-3,11-dione + NADP(+). Subject to inhibition by high substrate concentrations. Inhibited by testosterone concentrations above 10 uM. Inhibited by the primary and secondary bile acids chenodeoxycholic acid and ursodeoxycholic acid. Catalyzes the stereospecific NADPH-dependent reduction of the C4-C5 double bond of bile acid intermediates and steroid hormones carrying a delta(4)-3-one structure to yield an A/B cis-ring junction. This cis-configuration is crucial for bile acid biosynthesis and plays important roles in steroid metabolism. Capable of reducing a broad range of delta-(4)-3-ketosteroids from C18 (such as, 17beta-hydroxyestr-4-en-3-one) to C27 (such as, 7alpha-hydroxycholest-4-en-3-one). In Oryctolagus cuniculus (Rabbit), this protein is Aldo-keto reductase family 1 member D1 (AKR1D1).